Here is a 194-residue protein sequence, read N- to C-terminus: Recombination protein RecR (194 aa).

The C4-type zinc finger occupies 55–70; sequence CRECGNLAEGELCPIC. The region spanning 78 to 171 is the Toprim domain; sequence SLLAVVESVA…RVTRPAYGLP (94 aa).

Belongs to the RecR family.

Its function is as follows. May play a role in DNA repair. It seems to be involved in an RecBC-independent recombinational process of DNA repair. It may act with RecF and RecO. In Thermus thermophilus (strain ATCC 27634 / DSM 579 / HB8), this protein is Recombination protein RecR.